We begin with the raw amino-acid sequence, 214 residues long: Urease accessory protein UreG (214 aa).

23–30 (GPVGSGKT) contributes to the GTP binding site.

The protein belongs to the SIMIBI class G3E GTPase family. UreG subfamily. Homodimer. UreD, UreF and UreG form a complex that acts as a GTP-hydrolysis-dependent molecular chaperone, activating the urease apoprotein by helping to assemble the nickel containing metallocenter of UreC. The UreE protein probably delivers the nickel.

It localises to the cytoplasm. Functionally, facilitates the functional incorporation of the urease nickel metallocenter. This process requires GTP hydrolysis, probably effectuated by UreG. The chain is Urease accessory protein UreG from Bordetella bronchiseptica (strain ATCC BAA-588 / NCTC 13252 / RB50) (Alcaligenes bronchisepticus).